The chain runs to 402 residues: uncharacterized protein (402 aa).

The next 12 membrane-spanning stretches (helical) occupy residues 23 to 43, 52 to 72, 90 to 110, 121 to 141, 158 to 178, 180 to 200, 228 to 248, 255 to 275, 282 to 302, 309 to 329, 351 to 371, and 375 to 395; these read IVSV…PLAV, LGYG…ATLL, VLYG…SVAI, LLVG…AAIG, WNGI…VLLV, WLGL…GFAL, GMGL…ITLY, ANAV…RLLF, LGGF…LLLL, WVGL…FPAF, LFVD…ANLF, and SMFL…VALH.

This sequence belongs to the major facilitator superfamily. YhhS family.

Its subcellular location is the cell inner membrane. This is an uncharacterized protein from Pseudomonas aeruginosa (strain ATCC 15692 / DSM 22644 / CIP 104116 / JCM 14847 / LMG 12228 / 1C / PRS 101 / PAO1).